The following is a 466-amino-acid chain: Soluble pyridine nucleotide transhydrogenase (466 aa).

36–45 (ERYNNVGGGC) is a binding site for FAD.

This sequence belongs to the class-I pyridine nucleotide-disulfide oxidoreductase family. FAD serves as cofactor.

The protein resides in the cytoplasm. It carries out the reaction NAD(+) + NADPH = NADH + NADP(+). Functionally, conversion of NADPH, generated by peripheral catabolic pathways, to NADH, which can enter the respiratory chain for energy generation. This chain is Soluble pyridine nucleotide transhydrogenase, found in Yersinia enterocolitica serotype O:8 / biotype 1B (strain NCTC 13174 / 8081).